Consider the following 351-residue polypeptide: MLPSLQSLTKKVLAGQCLPEDQHYLLKCYDLWWNNAPITFDHNLRLIKSAGLQEGLDLNMALVKAVKENNYSLIKLFTEWGANINYGLISVNTEHTWDLCRELGAKKTLNEGDILQIFIDLKFHKTSSNIILCHEVFSDNLLLKKVNNLKMRIEIFWELREIIEKTDLLNNEFSLNTLLLKYWYAIAVRYNLKEAIQYFYQKYTHLNTWRLTCALCFNNVFDLHEAYEKDKICMDLEEMMRIACIKDHSLSTIYYCYMLGANINQAMLTSIQYYNIENIFFCMDLGADAFEEGMALVGQEGYEPIRNILSLKIYSPATTPLPKSTDPEIIDHELKNYFSKNMMVFLTYDLR.

Residues 57–89 (DLNMALVKAVKENNYSLIKLFTEWGANINYGLI) form an ANK repeat.

It belongs to the asfivirus MGF 360 family.

In terms of biological role, plays a role in virus cell tropism, and may be required for efficient virus replication in macrophages. The chain is Protein MGF 360-12L from Ornithodoros (relapsing fever ticks).